Consider the following 312-residue polypeptide: Acetylglutamate kinase (312 aa).

Substrate contacts are provided by residues 76-77, R98, and N199; that span reads GG.

Belongs to the acetylglutamate kinase family. ArgB subfamily.

It localises to the cytoplasm. It catalyses the reaction N-acetyl-L-glutamate + ATP = N-acetyl-L-glutamyl 5-phosphate + ADP. The protein operates within amino-acid biosynthesis; L-arginine biosynthesis; N(2)-acetyl-L-ornithine from L-glutamate: step 2/4. In terms of biological role, catalyzes the ATP-dependent phosphorylation of N-acetyl-L-glutamate. In Beutenbergia cavernae (strain ATCC BAA-8 / DSM 12333 / CCUG 43141 / JCM 11478 / NBRC 16432 / NCIMB 13614 / HKI 0122), this protein is Acetylglutamate kinase.